The following is a 389-amino-acid chain: MSRSQADSTSASEKRTVRKVVARKFIERPKTVVIMAGGTGGHVYPGLAVAEAMHQRGFNIAWLGSRGGMEKELVAKASEQMGFDIAFSEIEISGVRGKGRMALLAAPFRVLKAIEQAKQILQKLRPALVIGMGGFVAGPGGMAARKLKIPLVIHEQNAAAGTTNKILRRFANLTLVAFPGSLKNGVFVGNPVRKDIETVAPPQQRFAQKEGPIKVLVLGGSRGALAINEMVPAAFGKVNKALPFQIVHQTGKDKLEATKESYALAGVKANVVPYIELMSEALEWADFAICRSGALTVSELAAVGLGAVFIPFPYAIDDHQTKNADFLVQCGAAVVKQQKELSPEILAVLLNELLAGRERLQQMAVKAKQQSKPHAAEKFADFCEELIHD.

UDP-N-acetyl-alpha-D-glucosamine is bound by residues 39-41 (TGG), asparagine 157, arginine 193, serine 221, isoleucine 275, 294-299 (ALTVSE), and glutamine 320.

This sequence belongs to the glycosyltransferase 28 family. MurG subfamily.

The protein localises to the cell inner membrane. The enzyme catalyses di-trans,octa-cis-undecaprenyl diphospho-N-acetyl-alpha-D-muramoyl-L-alanyl-D-glutamyl-meso-2,6-diaminopimeloyl-D-alanyl-D-alanine + UDP-N-acetyl-alpha-D-glucosamine = di-trans,octa-cis-undecaprenyl diphospho-[N-acetyl-alpha-D-glucosaminyl-(1-&gt;4)]-N-acetyl-alpha-D-muramoyl-L-alanyl-D-glutamyl-meso-2,6-diaminopimeloyl-D-alanyl-D-alanine + UDP + H(+). It participates in cell wall biogenesis; peptidoglycan biosynthesis. Its function is as follows. Cell wall formation. Catalyzes the transfer of a GlcNAc subunit on undecaprenyl-pyrophosphoryl-MurNAc-pentapeptide (lipid intermediate I) to form undecaprenyl-pyrophosphoryl-MurNAc-(pentapeptide)GlcNAc (lipid intermediate II). The protein is UDP-N-acetylglucosamine--N-acetylmuramyl-(pentapeptide) pyrophosphoryl-undecaprenol N-acetylglucosamine transferase of Saccharophagus degradans (strain 2-40 / ATCC 43961 / DSM 17024).